The sequence spans 129 residues: Small ribosomal subunit protein uS11 (129 aa).

Belongs to the universal ribosomal protein uS11 family. Part of the 30S ribosomal subunit.

In terms of biological role, located on the platform of the 30S subunit. The polypeptide is Small ribosomal subunit protein uS11 (Haloarcula marismortui (strain ATCC 43049 / DSM 3752 / JCM 8966 / VKM B-1809) (Halobacterium marismortui)).